We begin with the raw amino-acid sequence, 290 residues long: Lysine export transcriptional regulatory protein LysG (290 aa).

Residues 1–57 (MNPIQLDTLLSIIDEGSFEGASLALSISPSAVSQRVKALEHHVGRVLVSRTQPAKAT) form the HTH lysR-type domain. A DNA-binding region (H-T-H motif) is located at residues 18–37 (FEGASLALSISPSAVSQRVK).

This sequence belongs to the LysR transcriptional regulatory family.

Its function is as follows. Positively regulates the expression of the exporter LysE. Induction requires the presence of a coinducer, which is either intracellular L-lysine, L-arginine or L-citrulline. L-histidine also acts as a coinducer of lysE expression, but this amino acid is not exported by LysE. The lysEG system prevents bacteriostasis due to elevated L-lysine or L-arginine concentrations that arise during growth in the presence of peptides or in mutants possessing a deregulated biosynthesis pathway. This chain is Lysine export transcriptional regulatory protein LysG, found in Corynebacterium glutamicum (strain ATCC 13032 / DSM 20300 / JCM 1318 / BCRC 11384 / CCUG 27702 / LMG 3730 / NBRC 12168 / NCIMB 10025 / NRRL B-2784 / 534).